The sequence spans 287 residues: MNQSVSAAPVVSAGSVTFGQDRPLSIIAGPCQMESRAHALEVAGALKEIAARLNIGLVFKTSFDKANRTSASGARGLGLKQALPVFAEIGSSLGLPVLTDVHEAAQCTEVAQAVDVLQIPAFLCRQTDLLLAAAATGKVVNVKKGQFLAPWDMANVVAKITGGGNPNVLVTERGASFGYNTLVSDMRSLPILARTTGAPVIFDATHSVQQPGGNGTSSGGEREFVPVLARAAVAVGVAGVFIETHPDPDHAPSDGPNMVPLREFEALVRRLMAFDALAKAADPALPK.

Belongs to the KdsA family.

The protein localises to the cytoplasm. The enzyme catalyses D-arabinose 5-phosphate + phosphoenolpyruvate + H2O = 3-deoxy-alpha-D-manno-2-octulosonate-8-phosphate + phosphate. The protein operates within carbohydrate biosynthesis; 3-deoxy-D-manno-octulosonate biosynthesis; 3-deoxy-D-manno-octulosonate from D-ribulose 5-phosphate: step 2/3. It participates in bacterial outer membrane biogenesis; lipopolysaccharide biosynthesis. In Nitrobacter hamburgensis (strain DSM 10229 / NCIMB 13809 / X14), this protein is 2-dehydro-3-deoxyphosphooctonate aldolase.